The following is a 179-amino-acid chain: Acireductone dioxygenase (179 aa).

Fe(2+) is bound by residues histidine 99, histidine 101, glutamate 105, and histidine 144. Residues histidine 99, histidine 101, glutamate 105, and histidine 144 each coordinate Ni(2+).

It belongs to the acireductone dioxygenase (ARD) family. As to quaternary structure, monomer. Requires Fe(2+) as cofactor. The cofactor is Ni(2+).

It catalyses the reaction 1,2-dihydroxy-5-(methylsulfanyl)pent-1-en-3-one + O2 = 3-(methylsulfanyl)propanoate + CO + formate + 2 H(+). The enzyme catalyses 1,2-dihydroxy-5-(methylsulfanyl)pent-1-en-3-one + O2 = 4-methylsulfanyl-2-oxobutanoate + formate + 2 H(+). It functions in the pathway amino-acid biosynthesis; L-methionine biosynthesis via salvage pathway; L-methionine from S-methyl-5-thio-alpha-D-ribose 1-phosphate: step 5/6. Functionally, catalyzes 2 different reactions between oxygen and the acireductone 1,2-dihydroxy-3-keto-5-methylthiopentene (DHK-MTPene) depending upon the metal bound in the active site. Fe-containing acireductone dioxygenase (Fe-ARD) produces formate and 2-keto-4-methylthiobutyrate (KMTB), the alpha-ketoacid precursor of methionine in the methionine recycle pathway. Ni-containing acireductone dioxygenase (Ni-ARD) produces methylthiopropionate, carbon monoxide and formate, and does not lie on the methionine recycle pathway. This is Acireductone dioxygenase from Exiguobacterium sibiricum (strain DSM 17290 / CCUG 55495 / CIP 109462 / JCM 13490 / 255-15).